Here is a 342-residue protein sequence, read N- to C-terminus: Photosystem II D2 protein (342 aa).

Residues 1–29 (ERGWFDILDDWLKRDRFVFVGWSGILLFP) are Cytoplasmic-facing. The helical transmembrane segment at 30–50 (CAYLALGGWLTGTTFVTSWYT) threads the bilayer. Residues 51-113 (HGLASSYLEG…IALHGAFGLI (63 aa)) lie on the Lumenal side of the membrane. Histidine 107 is a chlorophyll a binding site. Residues 114 to 130 (GFMLRQFEIARLVGVRP) form a helical membrane-spanning segment. Pheophytin a-binding residues include glutamine 119 and asparagine 132. Residues 131–141 (YNAIAFSAPIA) are Cytoplasmic-facing. A helical transmembrane segment spans residues 142 to 155 (VFVSVFLIYPLGQS). The Lumenal portion of the chain corresponds to 156 to 196 (SWFFAPSFGVAAIFRFLLFFQGFHNWTLNPFHMMGVAGVLG). Histidine 187 lines the chlorophyll a pocket. A helical membrane pass occupies residues 197–217 (GALLCAIHGATVENTLFQDGE). A plastoquinone-binding residues include histidine 204 and phenylalanine 251. Histidine 204 is a binding site for Fe cation. At 218–267 (GASTFRAFNPTQAEETYSMVTANRFWSQIFGIAFSNKRWLHFFMLFVPVT) the chain is on the cytoplasmic side. Residue histidine 258 coordinates Fe cation. The helical transmembrane segment at 268–284 (GLWMSAIGVVGLALNLR) threads the bilayer. Residues 285–342 (SYDFISQEIRAAEDPEFETFYTKNLLLNEGIRAWMAPQDQPHENFVFPEEVLPRGNAL) are Lumenal-facing.

It belongs to the reaction center PufL/M/PsbA/D family. PSII is composed of 1 copy each of membrane proteins PsbA, PsbB, PsbC, PsbD, PsbE, PsbF, PsbH, PsbI, PsbJ, PsbK, PsbL, PsbM, PsbT, PsbX, PsbY, PsbZ, Psb30/Ycf12, peripheral proteins PsbO, CyanoQ (PsbQ), PsbU, PsbV and a large number of cofactors. It forms dimeric complexes. It depends on The D1/D2 heterodimer binds P680, chlorophylls that are the primary electron donor of PSII, and subsequent electron acceptors. It shares a non-heme iron and each subunit binds pheophytin, quinone, additional chlorophylls, carotenoids and lipids. There is also a Cl(-1) ion associated with D1 and D2, which is required for oxygen evolution. The PSII complex binds additional chlorophylls, carotenoids and specific lipids. as a cofactor.

Its subcellular location is the cellular thylakoid membrane. The catalysed reaction is 2 a plastoquinone + 4 hnu + 2 H2O = 2 a plastoquinol + O2. Functionally, photosystem II (PSII) is a light-driven water:plastoquinone oxidoreductase that uses light energy to abstract electrons from H(2)O, generating O(2) and a proton gradient subsequently used for ATP formation. It consists of a core antenna complex that captures photons, and an electron transfer chain that converts photonic excitation into a charge separation. The D1/D2 (PsbA/PsbD) reaction center heterodimer binds P680, the primary electron donor of PSII as well as several subsequent electron acceptors. D2 is needed for assembly of a stable PSII complex. The chain is Photosystem II D2 protein from Thermostichus vulcanus (Synechococcus vulcanus).